The sequence spans 977 residues: Protein bric-a-brac 1 (977 aa).

The disordered stretch occupies residues 1–97 (MASAQAETNV…RSSSVASPSS (97 aa)). Positions 34 to 43 (PKSNRSSPTQ) are enriched in polar residues. Residues 44-69 (QEEKRIKSEDRTSPTGGAKDEDKESQ) are compositionally biased toward basic and acidic residues. The span at 80-97 (SPVSSPQGRSSSVASPSS) shows a compositional bias: low complexity. Residues 127–192 (VDVTLACDGR…MYRGEINVSQ (66 aa)) form the BTB domain. Disordered regions lie at residues 221 to 249 (AAAA…HDRE), 281 to 348 (ERQQ…GSTV), 362 to 434 (DMPS…RFPL), and 447 to 497 (SGLG…ADDL). Residues 316–330 (ERMELEQKERERQRD) are compositionally biased toward basic and acidic residues. The segment covering 372–396 (PLSRSSRPHSQSPQQQQAQQQGQLP) has biased composition (low complexity). The segment covering 469–491 (GGGVGGGGVGGGGAGGVGSGGGS) has biased composition (gly residues). The HTH psq-type domain occupies 559 to 611 (FRERGPLKSWRPETMAEAIFSVLKEGLSLSQAARKYDIPYPTFVLYANRVHNM). The H-T-H motif DNA-binding region spans 569 to 614 (RPETMAEAIFSVLKEGLSLSQAARKYDIPYPTFVLYANRVHNMLGP). A DNA-binding region (a.T hook) is located at residues 621–632 (DLRPKGRGRPQR). Disordered regions lie at residues 772 to 900 (ASIS…LGDL) and 925 to 977 (VGAS…TTSE). 4 stretches are compositionally biased toward low complexity: residues 804-816 (MAVA…QQQA), 838-853 (QQQQ…GGHQ), 862-872 (ASSSSSASSSS), and 925-966 (VGAS…SSGG).

In terms of tissue distribution, leg imaginal disk at the central region of the tarsus and in eye antenna disk at the basal cylinder.

The protein resides in the nucleus. Its function is as follows. Probably acts as a transcriptional regulator. Required for the specification of the tarsal segment. Also involved in antenna development. The chain is Protein bric-a-brac 1 (bab1) from Drosophila melanogaster (Fruit fly).